A 375-amino-acid chain; its full sequence is Queuine tRNA-ribosyltransferase (375 aa).

The active-site Proton acceptor is aspartate 89. Substrate is bound by residues 89–93, aspartate 143, glutamine 187, and glycine 214; that span reads DSGGF. The segment at 245-251 is RNA binding; it reads GVGKPED. The Nucleophile role is filled by aspartate 264. The interval 269–273 is RNA binding; important for wobble base 34 recognition; that stretch reads TRNAR. Zn(2+)-binding residues include cysteine 302, cysteine 304, cysteine 307, and histidine 333.

The protein belongs to the queuine tRNA-ribosyltransferase family. In terms of assembly, homodimer. Within each dimer, one monomer is responsible for RNA recognition and catalysis, while the other monomer binds to the replacement base PreQ1. It depends on Zn(2+) as a cofactor.

It carries out the reaction 7-aminomethyl-7-carbaguanine + guanosine(34) in tRNA = 7-aminomethyl-7-carbaguanosine(34) in tRNA + guanine. Its pathway is tRNA modification; tRNA-queuosine biosynthesis. Its function is as follows. Catalyzes the base-exchange of a guanine (G) residue with the queuine precursor 7-aminomethyl-7-deazaguanine (PreQ1) at position 34 (anticodon wobble position) in tRNAs with GU(N) anticodons (tRNA-Asp, -Asn, -His and -Tyr). Catalysis occurs through a double-displacement mechanism. The nucleophile active site attacks the C1' of nucleotide 34 to detach the guanine base from the RNA, forming a covalent enzyme-RNA intermediate. The proton acceptor active site deprotonates the incoming PreQ1, allowing a nucleophilic attack on the C1' of the ribose to form the product. After dissociation, two additional enzymatic reactions on the tRNA convert PreQ1 to queuine (Q), resulting in the hypermodified nucleoside queuosine (7-(((4,5-cis-dihydroxy-2-cyclopenten-1-yl)amino)methyl)-7-deazaguanosine). This Citrobacter koseri (strain ATCC BAA-895 / CDC 4225-83 / SGSC4696) protein is Queuine tRNA-ribosyltransferase.